A 101-amino-acid chain; its full sequence is Large ribosomal subunit protein uL23 (101 aa).

It belongs to the universal ribosomal protein uL23 family. Part of the 50S ribosomal subunit. Contacts protein L29, and trigger factor when it is bound to the ribosome.

In terms of biological role, one of the early assembly proteins it binds 23S rRNA. One of the proteins that surrounds the polypeptide exit tunnel on the outside of the ribosome. Forms the main docking site for trigger factor binding to the ribosome. This chain is Large ribosomal subunit protein uL23, found in Mannheimia succiniciproducens (strain KCTC 0769BP / MBEL55E).